Consider the following 79-residue polypeptide: UPF0291 protein SAV1341 (79 aa).

Residues 56 to 79 (IDPEGNDVTPEKIKEIQQKRDNKN) form a disordered region. Residues 64 to 79 (TPEKIKEIQQKRDNKN) are compositionally biased toward basic and acidic residues.

It belongs to the UPF0291 family.

It is found in the cytoplasm. The sequence is that of UPF0291 protein SAV1341 from Staphylococcus aureus (strain Mu50 / ATCC 700699).